A 288-amino-acid chain; its full sequence is Bifunctional protein FolD (288 aa).

NADP(+) contacts are provided by residues 166 to 168 (GAS) and I232.

The protein belongs to the tetrahydrofolate dehydrogenase/cyclohydrolase family. Homodimer.

The enzyme catalyses (6R)-5,10-methylene-5,6,7,8-tetrahydrofolate + NADP(+) = (6R)-5,10-methenyltetrahydrofolate + NADPH. The catalysed reaction is (6R)-5,10-methenyltetrahydrofolate + H2O = (6R)-10-formyltetrahydrofolate + H(+). It participates in one-carbon metabolism; tetrahydrofolate interconversion. Functionally, catalyzes the oxidation of 5,10-methylenetetrahydrofolate to 5,10-methenyltetrahydrofolate and then the hydrolysis of 5,10-methenyltetrahydrofolate to 10-formyltetrahydrofolate. The polypeptide is Bifunctional protein FolD (Acidithiobacillus ferrooxidans (strain ATCC 23270 / DSM 14882 / CIP 104768 / NCIMB 8455) (Ferrobacillus ferrooxidans (strain ATCC 23270))).